The chain runs to 566 residues: MCRVMKASFSRKVKLELCLLSDCALLSSSSAPTNELSGTNLEAHINESPDPNALVGVIIERSPSDSTQTNEFKGATKETLTIETPHSSECKGAGLLSPVSKSMLERLSKFEVEDAENVASYDTKIKKIVRSIVSSFAFGIFGVFLVLLDVTLLLADLIFNDSKLYIPLVYRSISLAIALFFLMDVLLRVFVEGRQHYFSDLLNVLDTAIIVTPLLVDVVYIFFDIKFLRNIPRWIHLVRLLRLIILIRIFHLIHQKRELEKLMRRLVSENKRRYTRDGFDLDLTYVTERIIAMSFPSSGRQSFYRNPIEEVVRFLDKKHPNHYRVYNLCSERAYDPKYFHNRVSRIMIDDHNVPTLHEMVVFTKEVNEWMAQDPANIVAIHCKGGKGRTGTMICAFLIASEIFLTAEESLYYFGERRTDKTNSSKFQGVETPSQNRYVGYFAQVKHLYNWNLPPRRILFIKRFIIYSIRGVGTGGVCDLKVRIVMEKKVVFSSTSLGNCSILHDIETDRVLIDVFSGPPLYDDVKVQFFSSNLPKYYDNCPFFFWFNTSFIQSNRHILHSFRLVFT.

Transmembrane regions (helical) follow at residues 135–155, 173–193, 208–228, and 234–254; these read SFAF…LLLA, ISLA…FVEG, AIIV…IKFL, and WIHL…HLIH. One can recognise a Phosphatase tensin-type domain in the interval 272–448; it reads RRYTRDGFDL…GYFAQVKHLY (177 aa). C382 acts as the Phosphocysteine intermediate in catalysis. The 112-residue stretch at 455 to 566 folds into the C2 tensin-type domain; that stretch reads RRILFIKRFI…ILHSFRLVFT (112 aa).

The protein localises to the endoplasmic reticulum membrane. It localises to the golgi apparatus membrane. The catalysed reaction is a 1,2-diacyl-sn-glycero-3-phospho-(1D-myo-inositol-3,4,5-trisphosphate) + H2O = a 1,2-diacyl-sn-glycero-3-phospho-(1D-myo-inositol-4,5-bisphosphate) + phosphate. Functionally, acts as a lipid phosphatase, removing the phosphate in the D3 position of the inositol ring from phosphatidylinositol 3,4,5-trisphosphate. In Macaca fascicularis (Crab-eating macaque), this protein is Phosphatidylinositol 3,4,5-trisphosphate 3-phosphatase TPTE2 (TPTE2).